The sequence spans 906 residues: Protein translocase subunit SecA (906 aa).

Residues Q86, 104–108, and D511 contribute to the ATP site; that span reads GEGKT. Basic and acidic residues-rich tracts occupy residues 853–865 and 877–888; these read HESV…RHDE and VRREGPKVKRND. Residues 853–906 are disordered; sequence HESVIDNNQRHDEDEQEETPKVQQVRREGPKVKRNDPCPCGSGKKYKQCHGKVE. Zn(2+) contacts are provided by C890, C892, C901, and H902. Over residues 896-906 the composition is skewed to basic residues; sequence KKYKQCHGKVE.

Belongs to the SecA family. Monomer and homodimer. Part of the essential Sec protein translocation apparatus which comprises SecA, SecYEG and auxiliary proteins SecDF-YajC and YidC. Requires Zn(2+) as cofactor.

It is found in the cell inner membrane. The protein resides in the cytoplasm. It carries out the reaction ATP + H2O + cellular proteinSide 1 = ADP + phosphate + cellular proteinSide 2.. Functionally, part of the Sec protein translocase complex. Interacts with the SecYEG preprotein conducting channel. Has a central role in coupling the hydrolysis of ATP to the transfer of proteins into and across the cell membrane, serving both as a receptor for the preprotein-SecB complex and as an ATP-driven molecular motor driving the stepwise translocation of polypeptide chains across the membrane. This Francisella tularensis subsp. novicida (strain U112) protein is Protein translocase subunit SecA.